We begin with the raw amino-acid sequence, 456 residues long: Adenylosuccinate lyase (456 aa).

Residues 15–16 (RY), 90–92 (NHD), and 122–123 (TS) each bind N(6)-(1,2-dicarboxyethyl)-AMP. H171 (proton donor/acceptor) is an active-site residue. Q247 contributes to the N(6)-(1,2-dicarboxyethyl)-AMP binding site. S295 functions as the Proton donor/acceptor in the catalytic mechanism. N(6)-(1,2-dicarboxyethyl)-AMP contacts are provided by residues S296, 301 to 303 (KVN), N309, R335, and 340 to 344 (STVLR).

Belongs to the lyase 1 family. Adenylosuccinate lyase subfamily. Homotetramer. Residues from neighboring subunits contribute catalytic and substrate-binding residues to each active site.

The enzyme catalyses N(6)-(1,2-dicarboxyethyl)-AMP = fumarate + AMP. It carries out the reaction (2S)-2-[5-amino-1-(5-phospho-beta-D-ribosyl)imidazole-4-carboxamido]succinate = 5-amino-1-(5-phospho-beta-D-ribosyl)imidazole-4-carboxamide + fumarate. Its pathway is purine metabolism; AMP biosynthesis via de novo pathway; AMP from IMP: step 2/2. The protein operates within purine metabolism; IMP biosynthesis via de novo pathway; 5-amino-1-(5-phospho-D-ribosyl)imidazole-4-carboxamide from 5-amino-1-(5-phospho-D-ribosyl)imidazole-4-carboxylate: step 2/2. Catalyzes two reactions in de novo purine nucleotide biosynthesis. Catalyzes the breakdown of 5-aminoimidazole- (N-succinylocarboxamide) ribotide (SAICAR or 2-[5-amino-1-(5-phospho-beta-D-ribosyl)imidazole-4-carboxamido]succinate) to 5-aminoimidazole-4-carboxamide ribotide (AICAR or 5-amino-1-(5-phospho-beta-D-ribosyl)imidazole-4-carboxamide) and fumarate, and of adenylosuccinate (ADS or N(6)-(1,2-dicarboxyethyl)-AMP) to adenosine monophosphate (AMP) and fumarate. This Legionella pneumophila (strain Corby) protein is Adenylosuccinate lyase (purB).